A 208-amino-acid polypeptide reads, in one-letter code: Na(+)-translocating NADH-quinone reductase subunit D (208 aa).

5 consecutive transmembrane segments (helical) span residues 42–62, 70–90, 103–123, 131–151, and 178–198; these read IVMT…ISLI, VRII…DQIL, VFVG…AFAM, FVDG…VAFI, and NGLF…IWGI.

It belongs to the NqrDE/RnfAE family. In terms of assembly, composed of six subunits; NqrA, NqrB, NqrC, NqrD, NqrE and NqrF.

The protein localises to the cell inner membrane. It carries out the reaction a ubiquinone + n Na(+)(in) + NADH + H(+) = a ubiquinol + n Na(+)(out) + NAD(+). In terms of biological role, NQR complex catalyzes the reduction of ubiquinone-1 to ubiquinol by two successive reactions, coupled with the transport of Na(+) ions from the cytoplasm to the periplasm. NqrA to NqrE are probably involved in the second step, the conversion of ubisemiquinone to ubiquinol. The polypeptide is Na(+)-translocating NADH-quinone reductase subunit D (Pasteurella multocida (strain Pm70)).